The chain runs to 342 residues: Probable dual-specificity RNA methyltransferase RlmN (342 aa).

E91 acts as the Proton acceptor in catalysis. Residues Y97 to D327 enclose the Radical SAM core domain. A disulfide bridge links C104 with C332. 3 residues coordinate [4Fe-4S] cluster: C111, C115, and C118. S-adenosyl-L-methionine contacts are provided by residues G158–E159, S190, S213–H215, and N289. C332 (S-methylcysteine intermediate) is an active-site residue.

The protein belongs to the radical SAM superfamily. RlmN family. It depends on [4Fe-4S] cluster as a cofactor.

The protein localises to the cytoplasm. It carries out the reaction adenosine(2503) in 23S rRNA + 2 reduced [2Fe-2S]-[ferredoxin] + 2 S-adenosyl-L-methionine = 2-methyladenosine(2503) in 23S rRNA + 5'-deoxyadenosine + L-methionine + 2 oxidized [2Fe-2S]-[ferredoxin] + S-adenosyl-L-homocysteine. The catalysed reaction is adenosine(37) in tRNA + 2 reduced [2Fe-2S]-[ferredoxin] + 2 S-adenosyl-L-methionine = 2-methyladenosine(37) in tRNA + 5'-deoxyadenosine + L-methionine + 2 oxidized [2Fe-2S]-[ferredoxin] + S-adenosyl-L-homocysteine. In terms of biological role, specifically methylates position 2 of adenine 2503 in 23S rRNA and position 2 of adenine 37 in tRNAs. In Clostridium botulinum (strain ATCC 19397 / Type A), this protein is Probable dual-specificity RNA methyltransferase RlmN.